A 244-amino-acid polypeptide reads, in one-letter code: tRNA (guanine-N(7)-)-methyltransferase (244 aa).

Residues 1–10 are compositionally biased toward polar residues; sequence MSDTPQSPAQ. Residues 1–20 form a disordered region; that stretch reads MSDTPQSPAQGSLAEHDEAR. Residues Glu-74, Glu-99, Asp-126, and Asp-149 each contribute to the S-adenosyl-L-methionine site. Residue Asp-149 is part of the active site. Substrate-binding positions include Lys-153, Asp-185, and 222 to 225; that span reads TKFE.

It belongs to the class I-like SAM-binding methyltransferase superfamily. TrmB family.

The enzyme catalyses guanosine(46) in tRNA + S-adenosyl-L-methionine = N(7)-methylguanosine(46) in tRNA + S-adenosyl-L-homocysteine. It participates in tRNA modification; N(7)-methylguanine-tRNA biosynthesis. Its function is as follows. Catalyzes the formation of N(7)-methylguanine at position 46 (m7G46) in tRNA. The polypeptide is tRNA (guanine-N(7)-)-methyltransferase (Pseudomonas aeruginosa (strain UCBPP-PA14)).